A 255-amino-acid polypeptide reads, in one-letter code: Hydroxyacylglutathione hydrolase (255 aa).

7 residues coordinate Zn(2+): H56, H58, D60, H61, H114, D133, and H171.

This sequence belongs to the metallo-beta-lactamase superfamily. Glyoxalase II family. As to quaternary structure, monomer. Zn(2+) serves as cofactor.

The catalysed reaction is an S-(2-hydroxyacyl)glutathione + H2O = a 2-hydroxy carboxylate + glutathione + H(+). It participates in secondary metabolite metabolism; methylglyoxal degradation; (R)-lactate from methylglyoxal: step 2/2. In terms of biological role, thiolesterase that catalyzes the hydrolysis of S-D-lactoyl-glutathione to form glutathione and D-lactic acid. The polypeptide is Hydroxyacylglutathione hydrolase (Cereibacter sphaeroides (strain ATCC 17029 / ATH 2.4.9) (Rhodobacter sphaeroides)).